A 1255-amino-acid chain; its full sequence is Kinesin-related protein 7 (1255 aa).

The disordered stretch occupies residues 1–26; that stretch reads MESPVVEGNSGEVATPTLPQPPTPVS. Positions 28–349 constitute a Kinesin motor domain; that stretch reads NIRVVCRVRP…LQFGTRAKTI (322 aa). 107 to 114 contributes to the ATP binding site; that stretch reads GQTASGKT. Composition is skewed to low complexity over residues 454-491, 545-563, and 583-603; these read NNNN…QQEN, NNNN…DSDG, and HNIN…NSNS. 6 disordered regions span residues 454-503, 530-564, 579-628, 661-686, 795-864, and 915-934; these read NNNN…NSSF, GNIS…SDGY, DLND…MDVN, ENEQ…SNAT, EEGS…TKSI, and ISIK…TSIK. The segment covering 608 to 628 has biased composition (polar residues); sequence VSTSYITSSPNLSPSKSMDVN. Over residues 813–834 the composition is skewed to acidic residues; it reads GDDDDEENEDNENEDVIVDSDE. Low complexity predominate over residues 915 to 932; sequence ISIKSNKEPSPSSSTTTS. The helical transmembrane segment at 945–965 threads the bilayer; it reads IIFTIILTITLVSSSLLCLYL. The stretch at 1088-1223 forms a coiled coil; it reads NYITKIDQLS…QELEDAPIAL (136 aa).

This sequence belongs to the TRAFAC class myosin-kinesin ATPase superfamily. Kinesin family.

The protein resides in the nucleus membrane. It localises to the cytoplasm. Its subcellular location is the cytoskeleton. Functionally, microtubule-associated force-producing protein that plays a role in organelle transport. Its motor activity is directed toward the microtubule's plus end. May be involved in cell motility or cell differentiation during prestalk formation. This Dictyostelium discoideum (Social amoeba) protein is Kinesin-related protein 7 (kif7).